The following is a 97-amino-acid chain: Translation initiation factor 1A (97 aa).

Positions 8–82 (IRVRLPDRKK…DRADIVWRYT (75 aa)) constitute an S1-like domain.

The protein belongs to the eIF-1A family.

Functionally, seems to be required for maximal rate of protein biosynthesis. Enhances ribosome dissociation into subunits and stabilizes the binding of the initiator Met-tRNA(I) to 40 S ribosomal subunits. This chain is Translation initiation factor 1A (eIF1A), found in Archaeoglobus fulgidus (strain ATCC 49558 / DSM 4304 / JCM 9628 / NBRC 100126 / VC-16).